We begin with the raw amino-acid sequence, 336 residues long: Dihydroorotate dehydrogenase (quinone) (336 aa).

FMN-binding positions include 62 to 66 (AGLDK) and T86. K66 contacts substrate. 111–115 (NRMGF) is a binding site for substrate. 2 residues coordinate FMN: N139 and N172. N172 provides a ligand contact to substrate. Catalysis depends on S175, which acts as the Nucleophile. N177 serves as a coordination point for substrate. FMN contacts are provided by K217 and T245. 246–247 (NT) provides a ligand contact to substrate. FMN contacts are provided by residues G268, G297, and 318–319 (YS).

The protein belongs to the dihydroorotate dehydrogenase family. Type 2 subfamily. In terms of assembly, monomer. FMN serves as cofactor.

Its subcellular location is the cell membrane. It catalyses the reaction (S)-dihydroorotate + a quinone = orotate + a quinol. The protein operates within pyrimidine metabolism; UMP biosynthesis via de novo pathway; orotate from (S)-dihydroorotate (quinone route): step 1/1. Functionally, catalyzes the conversion of dihydroorotate to orotate with quinone as electron acceptor. The chain is Dihydroorotate dehydrogenase (quinone) from Edwardsiella ictaluri (strain 93-146).